A 296-amino-acid chain; its full sequence is Tyrosine recombinase XerC (296 aa).

The 84-residue stretch at 1 to 84 folds into the Core-binding (CB) domain; that stretch reads MNKIQESFLY…TLRSFYEFWM (84 aa). A Tyr recombinase domain is found at 105 to 286; sequence YLPHFFYEEE…SNQQLRKVYL (182 aa). Catalysis depends on residues Arg145, Lys169, His238, Arg241, and His264. The active-site O-(3'-phospho-DNA)-tyrosine intermediate is the Tyr273.

It belongs to the 'phage' integrase family. XerC subfamily. As to quaternary structure, forms a cyclic heterotetrameric complex composed of two molecules of XerC and two molecules of XerD.

The protein localises to the cytoplasm. Site-specific tyrosine recombinase, which acts by catalyzing the cutting and rejoining of the recombining DNA molecules. The XerC-XerD complex is essential to convert dimers of the bacterial chromosome into monomers to permit their segregation at cell division. It also contributes to the segregational stability of plasmids. The chain is Tyrosine recombinase XerC from Staphylococcus carnosus (strain TM300).